We begin with the raw amino-acid sequence, 326 residues long: Target of rapamycin complex subunit LST8 (326 aa).

Met-1 is modified (N-acetylmethionine). WD repeat units lie at residues 1 to 37, 40 to 80, 83 to 122, 126 to 165, and 168 to 207; these read MNTS…CTRT, HQDS…PIIS, GVNK…LQCQ, QVNA…NEQL, and EPEV…GDEV. Thr-51 is subject to Phosphothreonine. A Glycyl lysine isopeptide (Lys-Gly) (interchain with G-Cter in SUMO3) cross-link involves residue Lys-86. Glycyl lysine isopeptide (Lys-Gly) (interchain with G-Cter in SUMO3) cross-links involve residues Lys-215, Lys-245, and Lys-261. A WD 6 repeat occupies 218–257; that stretch reads AHTRYALQCRFSPDSTLLATCSADQTCKIWRTSNFSLMTE. The WD 7 repeat unit spans residues 268–309; it reads SSRGWMWGCAFSGDSQYIVTASSDNLARLWCVETGEIKREYG. Lys-305 is covalently cross-linked (Glycyl lysine isopeptide (Lys-Gly) (interchain with G-Cter in SUMO3); alternate). Residues Lys-305 and Lys-313 each participate in a glycyl lysine isopeptide (Lys-Gly) (interchain with G-Cter in ubiquitin); alternate cross-link. Lys-313 participates in a covalent cross-link: Glycyl lysine isopeptide (Lys-Gly) (interchain with G-Cter in SUMO1); alternate.

Belongs to the WD repeat LST8 family. In terms of assembly, part of the mechanistic target of rapamycin complex 1 (mTORC1) which contains MTOR, MLST8 and RPTOR. mTORC1 associates with AKT1S1/PRAS40, which inhibits its activity. mTORC1 binds to and is inhibited by FKBP12-rapamycin. Within mTORC1, interacts directly with MTOR and RPTOR. Component of the mechanistic target of rapamycin complex 2 (mTORC2), consisting in two heterotretramers composed of MTOR, MLST8, RICTOR and MAPKAP1/SIN1. Contrary to mTORC1, mTORC2 does not bind to and is not sensitive to FKBP12-rapamycin. mTORC1 and mTORC2 associate with DEPTOR, which regulates their activity. Interacts with RHEB. Interacts with MEAK7. Interacts with SIK3. Interacts with SLC38A7; this interaction promotes the recruitment of mTORC1 to the lysosome and its subsequent activation. Post-translationally, phosphorylation at Thr-51 by CDK1 promotes ubiquitination by the SCF(FBXW7) complex, followed by degradation. Ubiquitination by the SCF(FBXW7) and SCF(FBXW11) complexes following phosphorylation at Thr-51 by CDK1, leads to its degradation by the proteasome. Ubiquitination at Lys-305 and Lys-313 by TRAF2 via 'Lys-63'-linked polyubiquitin chains inhibits formation of the mTORC2 complex, while promoting formation of the mTORC1 complex: ubiquitination disrupts the interaction between MLST8 and MAPKAP1/SIN1 to favor mTORC1 assembly. Deubiquitination at Lys-305 and Lys-313 by OTUD7B promotes MLST8 interaction with MAPKAP1/SIN1, facilitating mTORC2 assembly. In terms of processing, sumoylation with SUMO1, SUMO2 and SUMO3 promotes assembly of both mTORC1 and mTORC2 complexes.

The protein localises to the lysosome membrane. It localises to the cytoplasm. In terms of biological role, subunit of both mTORC1 and mTORC2, which regulates cell growth and survival in response to nutrient and hormonal signals. mTORC1 is activated in response to growth factors or amino acids. In response to nutrients, mTORC1 is recruited to the lysosome membrane and promotes protein, lipid and nucleotide synthesis by phosphorylating several substrates, such as ribosomal protein S6 kinase (RPS6KB1 and RPS6KB2) and EIF4EBP1 (4E-BP1). In the same time, it inhibits catabolic pathways by phosphorylating the autophagy initiation components ULK1 and ATG13, as well as transcription factor TFEB, a master regulators of lysosomal biogenesis and autophagy. The mTORC1 complex is inhibited in response to starvation and amino acid depletion. Within mTORC1, MLST8 interacts directly with MTOR and enhances its kinase activity. In nutrient-poor conditions, stabilizes the MTOR-RPTOR interaction and favors RPTOR-mediated inhibition of MTOR activity. As part of the mTORC2 complex, transduces signals from growth factors to pathways involved in proliferation, cytoskeletal organization, lipogenesis and anabolic output. mTORC2 is also activated by growth factors, but seems to be nutrient-insensitive. In response to growth factors, mTORC2 phosphorylates and activates AGC protein kinase family members, including AKT (AKT1, AKT2 and AKT3), PKC (PRKCA, PRKCB and PRKCE) and SGK1. mTORC2 functions upstream of Rho GTPases to regulate the actin cytoskeleton, probably by activating one or more Rho-type guanine nucleotide exchange factors. mTORC2 promotes the serum-induced formation of stress-fibers or F-actin. mTORC2 plays a critical role in AKT1 activation by mediating phosphorylation of different sites depending on the context, such as 'Thr-450', 'Ser-473', 'Ser-477' or 'Thr-479', facilitating the phosphorylation of the activation loop of AKT1 on 'Thr-308' by PDPK1/PDK1 which is a prerequisite for full activation. mTORC2 regulates the phosphorylation of SGK1 at 'Ser-422'. mTORC2 also modulates the phosphorylation of PRKCA on 'Ser-657'. Within mTORC2, MLST8 acts as a bridge between MAPKAP1/SIN1 and MTOR. This is Target of rapamycin complex subunit LST8 from Bos taurus (Bovine).